The chain runs to 1005 residues: Myosin IE heavy chain (1005 aa).

The 686-residue stretch at 8 to 693 (EGVPDFVLLN…TLFYFEEKRE (686 aa)) folds into the Myosin motor domain. 101–108 (GESGAGKT) is a binding site for ATP. The segment at 539–562 (SDPLVQGLFPPTRPEDSKKRPETA) is disordered. Residues 551 to 560 (RPEDSKKRPE) are compositionally biased toward basic and acidic residues. An actin-binding region spans residues 556–630 (KKRPETAGSQ…RAGFAGRIEY (75 aa)). IQ domains lie at 694–722 (LEMP…RKAA) and 716–745 (WNQR…HRAF). Residues 810–1004 (KKKWDFRRHF…KGNQATIQFK (195 aa)) enclose the TH1 domain.

Belongs to the TRAFAC class myosin-kinesin ATPase superfamily. Myosin family. Myosin I heavy chain is single-headed. Dimer of a heavy and a light chain. Inability to self-assemble into filaments.

In terms of biological role, myosin is a protein that binds to actin and has ATPase activity that is activated by actin. May play a role in moving membranes relative to actin. In Dictyostelium discoideum (Social amoeba), this protein is Myosin IE heavy chain (myoE).